The following is a 507-amino-acid chain: Histidine ammonia-lyase (507 aa).

Residues 142–144 constitute a cross-link (5-imidazolinone (Ala-Gly)); that stretch reads ASG. At Ser-143 the chain carries 2,3-didehydroalanine (Ser).

It belongs to the PAL/histidase family. Contains an active site 4-methylidene-imidazol-5-one (MIO), which is formed autocatalytically by cyclization and dehydration of residues Ala-Ser-Gly.

It is found in the cytoplasm. The catalysed reaction is L-histidine = trans-urocanate + NH4(+). Its pathway is amino-acid degradation; L-histidine degradation into L-glutamate; N-formimidoyl-L-glutamate from L-histidine: step 1/3. This Symbiobacterium thermophilum (strain DSM 24528 / JCM 14929 / IAM 14863 / T) protein is Histidine ammonia-lyase.